A 444-amino-acid chain; its full sequence is Ribosomal protein uS12 methylthiotransferase RimO (444 aa).

The MTTase N-terminal domain occupies 2 to 118 (PSIGLLSLGC…IVEVVNHALE (117 aa)). Residues C11, C47, C81, C156, C160, and C163 each contribute to the [4Fe-4S] cluster site. The 231-residue stretch at 142–372 (STPSYTAYVK…MKLQREISLS (231 aa)) folds into the Radical SAM core domain. The region spanning 375–444 (QKRIGQEIEV…EYDLMGELAQ (70 aa)) is the TRAM domain.

Belongs to the methylthiotransferase family. RimO subfamily. Requires [4Fe-4S] cluster as cofactor.

The protein localises to the cytoplasm. It catalyses the reaction L-aspartate(89)-[ribosomal protein uS12]-hydrogen + (sulfur carrier)-SH + AH2 + 2 S-adenosyl-L-methionine = 3-methylsulfanyl-L-aspartate(89)-[ribosomal protein uS12]-hydrogen + (sulfur carrier)-H + 5'-deoxyadenosine + L-methionine + A + S-adenosyl-L-homocysteine + 2 H(+). In terms of biological role, catalyzes the methylthiolation of an aspartic acid residue of ribosomal protein uS12. In Desulforamulus reducens (strain ATCC BAA-1160 / DSM 100696 / MI-1) (Desulfotomaculum reducens), this protein is Ribosomal protein uS12 methylthiotransferase RimO.